The sequence spans 232 residues: Thiamine import ATP-binding protein ThiQ (232 aa).

In terms of domain architecture, ABC transporter spans 2–230; it reads LKLTDITWLY…KASASALLGI (229 aa). Residue 32–39 coordinates ATP; sequence GPSGAGKS.

The protein belongs to the ABC transporter superfamily. Thiamine importer (TC 3.A.1.19.1) family. The complex is composed of two ATP-binding proteins (ThiQ), two transmembrane proteins (ThiP) and a solute-binding protein (ThiB).

It is found in the cell inner membrane. The catalysed reaction is thiamine(out) + ATP + H2O = thiamine(in) + ADP + phosphate + H(+). In terms of biological role, part of the ABC transporter complex ThiBPQ involved in thiamine import. Responsible for energy coupling to the transport system. This is Thiamine import ATP-binding protein ThiQ from Shigella sonnei (strain Ss046).